Reading from the N-terminus, the 216-residue chain is Somatotropin (216 aa).

Positions 1–26 (MAADSQTSRLLTFTLLCLLWPQEAGA) are cleaved as a signal peptide. Residue His45 coordinates Zn(2+). The cysteines at positions 78 and 189 are disulfide-linked. Ser131 carries the post-translational modification Phosphoserine. A Zn(2+)-binding site is contributed by Glu198. An intrachain disulfide couples Cys206 to Cys214.

This sequence belongs to the somatotropin/prolactin family.

Its subcellular location is the secreted. Functionally, plays an important role in growth control. Its major role in stimulating body growth is to stimulate the liver and other tissues to secrete IGF1. It stimulates both the differentiation and proliferation of myoblasts. It also stimulates amino acid uptake and protein synthesis in muscle and other tissues. The polypeptide is Somatotropin (GH1) (Mesocricetus auratus (Golden hamster)).